A 543-amino-acid chain; its full sequence is Hydroxylamine reductase (543 aa).

4 residues coordinate [4Fe-4S] cluster: Cys-5, Cys-8, Cys-17, and Cys-23. Hybrid [4Fe-2O-2S] cluster is bound by residues His-250, Glu-274, Cys-318, Cys-410, Cys-438, Cys-463, Glu-498, and Lys-500. At Cys-410 the chain carries Cysteine persulfide.

This sequence belongs to the HCP family. The cofactor is [4Fe-4S] cluster. Requires hybrid [4Fe-2O-2S] cluster as cofactor.

The protein localises to the cytoplasm. The enzyme catalyses A + NH4(+) + H2O = hydroxylamine + AH2 + H(+). Functionally, catalyzes the reduction of hydroxylamine to form NH(3) and H(2)O. This is Hydroxylamine reductase from Petrotoga mobilis (strain DSM 10674 / SJ95).